A 336-amino-acid chain; its full sequence is Hdr-like menaquinol oxidoreductase cytochrome b-like subunit (336 aa).

6 helical membrane passes run 4–24 (ALYI…IGTI), 60–80 (IDSP…VFLF), 102–122 (WLWL…IRHL), 145–165 (VAIV…LAFL), 184–204 (HLIL…RYII), and 232–252 (LHWL…YIPF).

Its subcellular location is the cell membrane. Its function is as follows. Has menaquinol-oxidizing activity. The HmeC and HmeD subunits may together mediate electron transfer from menaquinol to an unidentified electron acceptor on the cytoplasmic side of the membrane. The polypeptide is Hdr-like menaquinol oxidoreductase cytochrome b-like subunit (hmeC) (Archaeoglobus profundus (strain DSM 5631 / JCM 9629 / NBRC 100127 / Av18)).